A 353-amino-acid chain; its full sequence is F-box protein At2g14290 (353 aa).

In terms of domain architecture, F-box spans 6–58 (PRTWSELPPDLLGSIFHRLSFTDFHRAKIVCWNWNLSSKLTVPKKIRSPWLML).

This chain is F-box protein At2g14290, found in Arabidopsis thaliana (Mouse-ear cress).